Consider the following 191-residue polypeptide: FMN reductase (NADH) RutF (191 aa).

It belongs to the non-flavoprotein flavin reductase family. RutF subfamily.

It carries out the reaction FMNH2 + NAD(+) = FMN + NADH + 2 H(+). Its function is as follows. Catalyzes the reduction of FMN to FMNH2 which is used to reduce pyrimidine by RutA via the Rut pathway. This chain is FMN reductase (NADH) RutF, found in Escherichia coli O1:K1 / APEC.